A 692-amino-acid chain; its full sequence is Polyphosphate kinase (692 aa).

Asn-57 serves as a coordination point for ATP. Mg(2+) is bound by residues Arg-383 and Arg-413. His-443 functions as the Phosphohistidine intermediate in the catalytic mechanism. 3 residues coordinate ATP: Tyr-476, Arg-572, and His-600.

This sequence belongs to the polyphosphate kinase 1 (PPK1) family. Requires Mg(2+) as cofactor. Post-translationally, an intermediate of this reaction is the autophosphorylated ppk in which a phosphate is covalently linked to a histidine residue through a N-P bond.

The catalysed reaction is [phosphate](n) + ATP = [phosphate](n+1) + ADP. Its function is as follows. Catalyzes the reversible transfer of the terminal phosphate of ATP to form a long-chain polyphosphate (polyP). This Acinetobacter baumannii (strain AYE) protein is Polyphosphate kinase.